A 206-amino-acid polypeptide reads, in one-letter code: Orotate phosphoribosyltransferase (206 aa).

5-phospho-alpha-D-ribose 1-diphosphate is bound by residues Lys-26, 72-73 (YK), Arg-99, Lys-100, Lys-103, His-105, and 124-132 (DDVMTSGFS). The orotate site is built by Thr-128 and Arg-157.

This sequence belongs to the purine/pyrimidine phosphoribosyltransferase family. PyrE subfamily. As to quaternary structure, homodimer. Requires Mg(2+) as cofactor.

The enzyme catalyses orotidine 5'-phosphate + diphosphate = orotate + 5-phospho-alpha-D-ribose 1-diphosphate. It participates in pyrimidine metabolism; UMP biosynthesis via de novo pathway; UMP from orotate: step 1/2. Its function is as follows. Catalyzes the transfer of a ribosyl phosphate group from 5-phosphoribose 1-diphosphate to orotate, leading to the formation of orotidine monophosphate (OMP). This chain is Orotate phosphoribosyltransferase, found in Buchnera aphidicola subsp. Baizongia pistaciae (strain Bp).